Consider the following 368-residue polypeptide: Germination protease (368 aa).

Residues 1–16 (MKKSELDVNQYLIRTD) constitute a propeptide that is removed on maturation.

It belongs to the peptidase A25 family. In terms of assembly, homotetramer. Post-translationally, autoproteolytically processed. The inactive tetrameric zymogen termed p46 autoprocesses to a smaller form termed p41, which is active only during spore germination.

It catalyses the reaction Endopeptidase action with P4 Glu or Asp, P1 preferably Glu &gt; Asp, P1' hydrophobic and P2' Ala.. Its function is as follows. Initiates the degradation of small, acid-soluble proteins during spore germination. The protein is Germination protease (gpr) of Bacillus subtilis (strain 168).